The chain runs to 142 residues: Small ribosomal subunit protein bS16 (142 aa).

The tract at residues 101–142 (RPSFDALGGDDAGKGEAITQKKKAEKKDEAAAESSSSESTEA) is disordered. A compositionally biased stretch (low complexity) spans 132 to 142 (AESSSSESTEA).

Belongs to the bacterial ribosomal protein bS16 family.

The polypeptide is Small ribosomal subunit protein bS16 (Streptomyces avermitilis (strain ATCC 31267 / DSM 46492 / JCM 5070 / NBRC 14893 / NCIMB 12804 / NRRL 8165 / MA-4680)).